The chain runs to 194 residues: AP-3 complex subunit sigma (194 aa).

It belongs to the adaptor complexes small subunit family. As to quaternary structure, adaptor protein complex 3 (AP-3) is a heterotetramer composed of 2 large adaptins (APL5 and APL6), a medium adaptin (APM3) and a small adaptin (APS3).

It is found in the golgi apparatus. It localises to the cytoplasmic vesicle membrane. Its function is as follows. Part of the AP-3 complex, an adaptor-related complex which is not clathrin-associated. The complex is associated with the Golgi region as well as more peripheral structures. It facilitates the budding of vesicles from the Golgi membrane and may be directly involved in trafficking to the vacuole. Required for the transport via the ALP pathway, which directs the transport of the cargo proteins PHO8 and VAM3 to the vacuole. This Saccharomyces cerevisiae (strain ATCC 204508 / S288c) (Baker's yeast) protein is AP-3 complex subunit sigma (APS3).